A 603-amino-acid chain; its full sequence is Pyruvate oxidase (603 aa).

The tract at residues 1 to 191 (MVMKQTKQTN…WYASANSYQT (191 aa)) is core. The interval 192-342 (PLLPEPDVQA…ILAQVSERES (151 aa)) is FAD-binding. The thiamine pyrophosphate binding stretch occupies residues 343 to 603 (TPWWQANLAN…LQHQIGQGGF (261 aa)). The Mg(2+) site is built by Asp447, Asn474, and Gln476.

It belongs to the TPP enzyme family. As to quaternary structure, homotetramer. FAD is required as a cofactor. Mg(2+) serves as cofactor. It depends on thiamine diphosphate as a cofactor.

The catalysed reaction is pyruvate + phosphate + O2 + H(+) = acetyl phosphate + H2O2 + CO2. In terms of biological role, important for the aerobic growth. Decarboxylates pyruvate in four steps. The energy released is partially stored in acetyl phosphate. The sequence is that of Pyruvate oxidase (pox5) from Lactiplantibacillus plantarum (strain ATCC BAA-793 / NCIMB 8826 / WCFS1) (Lactobacillus plantarum).